Consider the following 588-residue polypeptide: Adenine deaminase (588 aa).

This sequence belongs to the metallo-dependent hydrolases superfamily. Adenine deaminase family. As to quaternary structure, homodimer. The cofactor is Mn(2+).

The enzyme catalyses adenine + H2O + H(+) = hypoxanthine + NH4(+). This is Adenine deaminase from Escherichia coli O81 (strain ED1a).